A 635-amino-acid polypeptide reads, in one-letter code: DNA-directed RNA polymerase subunit gamma (635 aa).

Zn(2+)-binding residues include cysteine 74, cysteine 76, cysteine 89, and cysteine 92. Aspartate 471, aspartate 473, and aspartate 475 together coordinate Mg(2+).

It belongs to the RNA polymerase beta' chain family. RpoC1 subfamily. As to quaternary structure, in cyanobacteria the RNAP catalytic core is composed of 2 alpha, 1 beta, 1 beta', 1 gamma and 1 omega subunit. When a sigma factor is associated with the core the holoenzyme is formed, which can initiate transcription. Mg(2+) serves as cofactor. It depends on Zn(2+) as a cofactor.

It catalyses the reaction RNA(n) + a ribonucleoside 5'-triphosphate = RNA(n+1) + diphosphate. Its function is as follows. DNA-dependent RNA polymerase catalyzes the transcription of DNA into RNA using the four ribonucleoside triphosphates as substrates. The chain is DNA-directed RNA polymerase subunit gamma from Prochlorococcus marinus (strain NATL1A).